The following is a 24-amino-acid chain: MAPRGFSCLLLSTSEIDLPVKRRT.

The protein belongs to the humanin family. In terms of tissue distribution, highly expressed in the kidney, heart muscle and testis.

It localises to the secreted. The protein localises to the cytoplasm. In terms of biological role, plays a role as a neuroprotective and antiapoptotic factor. This is Humanin-like 1 from Homo sapiens (Human).